The primary structure comprises 525 residues: GMP synthase [glutamine-hydrolyzing] (525 aa).

The region spanning 9–207 is the Glutamine amidotransferase type-1 domain; that stretch reads RILILDFGSQ…VQDICGCEAL (199 aa). Cys-86 serves as the catalytic Nucleophile. Residues His-181 and Glu-183 contribute to the active site. In terms of domain architecture, GMPS ATP-PPase spans 208-400; it reads WTPSNIVEDA…LGLPYDMVYR (193 aa). 235–241 provides a ligand contact to ATP; it reads SGGVDSS.

In terms of assembly, homodimer.

The catalysed reaction is XMP + L-glutamine + ATP + H2O = GMP + L-glutamate + AMP + diphosphate + 2 H(+). The protein operates within purine metabolism; GMP biosynthesis; GMP from XMP (L-Gln route): step 1/1. Its function is as follows. Catalyzes the synthesis of GMP from XMP. This Pseudomonas putida (strain W619) protein is GMP synthase [glutamine-hydrolyzing].